The following is a 584-amino-acid chain: 2-succinyl-5-enolpyruvyl-6-hydroxy-3-cyclohexene-1-carboxylate synthase (584 aa).

It belongs to the TPP enzyme family. MenD subfamily. Homodimer. Mg(2+) is required as a cofactor. Mn(2+) serves as cofactor. The cofactor is thiamine diphosphate.

The enzyme catalyses isochorismate + 2-oxoglutarate + H(+) = 5-enolpyruvoyl-6-hydroxy-2-succinyl-cyclohex-3-ene-1-carboxylate + CO2. The protein operates within quinol/quinone metabolism; 1,4-dihydroxy-2-naphthoate biosynthesis; 1,4-dihydroxy-2-naphthoate from chorismate: step 2/7. It functions in the pathway quinol/quinone metabolism; menaquinone biosynthesis. Catalyzes the thiamine diphosphate-dependent decarboxylation of 2-oxoglutarate and the subsequent addition of the resulting succinic semialdehyde-thiamine pyrophosphate anion to isochorismate to yield 2-succinyl-5-enolpyruvyl-6-hydroxy-3-cyclohexene-1-carboxylate (SEPHCHC). This chain is 2-succinyl-5-enolpyruvyl-6-hydroxy-3-cyclohexene-1-carboxylate synthase, found in Bacillus anthracis.